The primary structure comprises 235 residues: Segregation and condensation protein A (235 aa).

Belongs to the ScpA family. In terms of assembly, component of a cohesin-like complex composed of ScpA, ScpB and the Smc homodimer, in which ScpA and ScpB bind to the head domain of Smc. The presence of the three proteins is required for the association of the complex with DNA.

The protein localises to the cytoplasm. Its function is as follows. Participates in chromosomal partition during cell division. May act via the formation of a condensin-like complex containing Smc and ScpB that pull DNA away from mid-cell into both cell halves. The sequence is that of Segregation and condensation protein A from Streptococcus agalactiae serotype Ia (strain ATCC 27591 / A909 / CDC SS700).